The primary structure comprises 365 residues: MGRTQTVLALESSCDDTAAAVLRKGATGETQVLSSIVRGQDSLHAAYGGVVPEIAARAHAEILDICVEDALQAAQTSLHDVDAIAVTAGPGLIGGVVSGVMCAKGLALATGKPLYGINHLAGHALTPRLTDNVPFPYLMLLVSGGHCQFLLIKGPDDFKRIGGTIDDAPGEAFDKIARLLALPQPGGPSVERSARQGDAKRFSLPRPLLDRPGCDMSFSGLKTAVLRVRDGLVQDQGGLYPQDQADLSAGFQAAVVDVLAEKTSRAMQQYQQLSPTTATLCVAGGVAANMAIRTRLETVARDNGAVFVAPPLALCTDNAAMIGFAALERMADHPPDDLTLAARPRWPLDSKSPAMLGSGKKGAKA.

Fe cation is bound by residues H119 and H123. Substrate contacts are provided by residues 141-145, D174, G187, and N289; that span reads LVSGG. D317 contacts Fe cation. The segment at 342 to 365 is disordered; that stretch reads ARPRWPLDSKSPAMLGSGKKGAKA.

Belongs to the KAE1 / TsaD family. The cofactor is Fe(2+).

Its subcellular location is the cytoplasm. The enzyme catalyses L-threonylcarbamoyladenylate + adenosine(37) in tRNA = N(6)-L-threonylcarbamoyladenosine(37) in tRNA + AMP + H(+). In terms of biological role, required for the formation of a threonylcarbamoyl group on adenosine at position 37 (t(6)A37) in tRNAs that read codons beginning with adenine. Is involved in the transfer of the threonylcarbamoyl moiety of threonylcarbamoyl-AMP (TC-AMP) to the N6 group of A37, together with TsaE and TsaB. TsaD likely plays a direct catalytic role in this reaction. In Roseobacter denitrificans (strain ATCC 33942 / OCh 114) (Erythrobacter sp. (strain OCh 114)), this protein is tRNA N6-adenosine threonylcarbamoyltransferase.